The primary structure comprises 153 residues: Large ribosomal subunit protein uL22 (153 aa).

Positions 125 to 153 are disordered; it reads EPKEARQARKKAKSGRPAAAAKSETEKGA.

This sequence belongs to the universal ribosomal protein uL22 family. Part of the 50S ribosomal subunit.

Functionally, this protein binds specifically to 23S rRNA; its binding is stimulated by other ribosomal proteins, e.g. L4, L17, and L20. It is important during the early stages of 50S assembly. It makes multiple contacts with different domains of the 23S rRNA in the assembled 50S subunit and ribosome. Its function is as follows. The globular domain of the protein is located near the polypeptide exit tunnel on the outside of the subunit, while an extended beta-hairpin is found that lines the wall of the exit tunnel in the center of the 70S ribosome. The protein is Large ribosomal subunit protein uL22 of Cutibacterium acnes (strain DSM 16379 / KPA171202) (Propionibacterium acnes).